Consider the following 158-residue polypeptide: SsrA-binding protein (158 aa).

The tract at residues 130-158 (KGKKNHDKREAQAKRDWSRQKQRLLKDHG) is disordered. Positions 136-158 (DKREAQAKRDWSRQKQRLLKDHG) are enriched in basic and acidic residues.

Belongs to the SmpB family.

Its subcellular location is the cytoplasm. Its function is as follows. Required for rescue of stalled ribosomes mediated by trans-translation. Binds to transfer-messenger RNA (tmRNA), required for stable association of tmRNA with ribosomes. tmRNA and SmpB together mimic tRNA shape, replacing the anticodon stem-loop with SmpB. tmRNA is encoded by the ssrA gene; the 2 termini fold to resemble tRNA(Ala) and it encodes a 'tag peptide', a short internal open reading frame. During trans-translation Ala-aminoacylated tmRNA acts like a tRNA, entering the A-site of stalled ribosomes, displacing the stalled mRNA. The ribosome then switches to translate the ORF on the tmRNA; the nascent peptide is terminated with the 'tag peptide' encoded by the tmRNA and targeted for degradation. The ribosome is freed to recommence translation, which seems to be the essential function of trans-translation. The chain is SsrA-binding protein from Ruegeria sp. (strain TM1040) (Silicibacter sp.).